Here is a 426-residue protein sequence, read N- to C-terminus: Serine--tRNA ligase (426 aa).

A disordered region spans residues 44–67 (TEKQALQSERNATSKQIGMLKKKG). Residues 47–59 (QALQSERNATSKQ) are compositionally biased toward polar residues. An L-serine-binding site is contributed by 231–233 (TAE). ATP is bound by residues 262-264 (RRE) and Val-278. Glu-285 serves as a coordination point for L-serine. 349 to 352 (EVSS) lines the ATP pocket. L-serine is bound at residue Ser-384.

This sequence belongs to the class-II aminoacyl-tRNA synthetase family. Type-1 seryl-tRNA synthetase subfamily. Homodimer. The tRNA molecule binds across the dimer.

Its subcellular location is the cytoplasm. The catalysed reaction is tRNA(Ser) + L-serine + ATP = L-seryl-tRNA(Ser) + AMP + diphosphate + H(+). The enzyme catalyses tRNA(Sec) + L-serine + ATP = L-seryl-tRNA(Sec) + AMP + diphosphate + H(+). Its pathway is aminoacyl-tRNA biosynthesis; selenocysteinyl-tRNA(Sec) biosynthesis; L-seryl-tRNA(Sec) from L-serine and tRNA(Sec): step 1/1. In terms of biological role, catalyzes the attachment of serine to tRNA(Ser). Is also able to aminoacylate tRNA(Sec) with serine, to form the misacylated tRNA L-seryl-tRNA(Sec), which will be further converted into selenocysteinyl-tRNA(Sec). The polypeptide is Serine--tRNA ligase (Akkermansia muciniphila (strain ATCC BAA-835 / DSM 22959 / JCM 33894 / BCRC 81048 / CCUG 64013 / CIP 107961 / Muc)).